Reading from the N-terminus, the 158-residue chain is Ribonuclease H (158 aa).

One can recognise an RNase H type-1 domain in the interval 3–144; that stretch reads ELKLIHIFTD…CDQLARAAAE (142 aa). Mg(2+) contacts are provided by D12, E50, D72, and D136. The disordered stretch occupies residues 137 to 158; that stretch reads QLARAAAEASPTQVDEGYQPES.

It belongs to the RNase H family. In terms of assembly, monomer. Requires Mg(2+) as cofactor.

Its subcellular location is the cytoplasm. The enzyme catalyses Endonucleolytic cleavage to 5'-phosphomonoester.. In terms of biological role, endonuclease that specifically degrades the RNA of RNA-DNA hybrids. This chain is Ribonuclease H, found in Shewanella sp. (strain ANA-3).